The sequence spans 631 residues: tRNA uridine 5-carboxymethylaminomethyl modification enzyme MnmG (631 aa).

13 to 18 (GGGHAG) serves as a coordination point for FAD. An NAD(+)-binding site is contributed by 273–287 (GPRYCPSIEDKVNRF).

This sequence belongs to the MnmG family. As to quaternary structure, homodimer. Heterotetramer of two MnmE and two MnmG subunits. The cofactor is FAD.

Its subcellular location is the cytoplasm. In terms of biological role, NAD-binding protein involved in the addition of a carboxymethylaminomethyl (cmnm) group at the wobble position (U34) of certain tRNAs, forming tRNA-cmnm(5)s(2)U34. This is tRNA uridine 5-carboxymethylaminomethyl modification enzyme MnmG from Chromohalobacter salexigens (strain ATCC BAA-138 / DSM 3043 / CIP 106854 / NCIMB 13768 / 1H11).